The sequence spans 165 residues: 2-C-methyl-D-erythritol 2,4-cyclodiphosphate synthase (165 aa).

A divalent metal cation-binding residues include Asp12 and His14. Residues 12–14 (DIH) and 38–39 (HS) each bind 4-CDP-2-C-methyl-D-erythritol 2-phosphate. His46 contributes to the a divalent metal cation binding site. 4-CDP-2-C-methyl-D-erythritol 2-phosphate contacts are provided by residues 60-62 (DIG), 136-139 (TTNE), and Arg146.

The protein belongs to the IspF family. As to quaternary structure, homotrimer. A divalent metal cation serves as cofactor.

It catalyses the reaction 4-CDP-2-C-methyl-D-erythritol 2-phosphate = 2-C-methyl-D-erythritol 2,4-cyclic diphosphate + CMP. It functions in the pathway isoprenoid biosynthesis; isopentenyl diphosphate biosynthesis via DXP pathway; isopentenyl diphosphate from 1-deoxy-D-xylulose 5-phosphate: step 4/6. Its function is as follows. Involved in the biosynthesis of isopentenyl diphosphate (IPP) and dimethylallyl diphosphate (DMAPP), two major building blocks of isoprenoid compounds. Catalyzes the conversion of 4-diphosphocytidyl-2-C-methyl-D-erythritol 2-phosphate (CDP-ME2P) to 2-C-methyl-D-erythritol 2,4-cyclodiphosphate (ME-CPP) with a corresponding release of cytidine 5-monophosphate (CMP). This chain is 2-C-methyl-D-erythritol 2,4-cyclodiphosphate synthase, found in Nostoc sp. (strain PCC 7120 / SAG 25.82 / UTEX 2576).